The chain runs to 577 residues: MLAAQKQRITELFQAAVAPLVAGTELNPTVTLERPRDPSHGDVACNLAMQIAKPLKKNPREVAQVLVAALLDNPANRDLIESAEIAGPGFINLRLTPASRQSVVKTVLQQGAQYGKSNLGAGKKVIIEFVSANPTGPLHVGHGRQGALGDAMSSLFDAQGYAVTREFYYNDAGVQIATLATSVQARARGLKPGAEGWPESAYNGDYIQDIANDFLAKKTVSASDGLPVTASGDIDDIESIRAFAVAYLRREQDLDLQAFGVKFDNYYLESSLYNDGKVAATVDALIKADKTYELDGALWLRTTDYRDDKDRVMKKSDGTYTYFVPDVAYHTVKWQRGFTQAINVQGSDHHGTIARVRAGLQALDIGIPQGYPDYVLHKMVTVMRNGEEVKISKRAGSYVTLRDLIEWSNGETVEGQERDLTRGRDAVRFFLISRKADTEFVFDVDVALSQSDENPVYYVQYAHARICSVLAQWTDGDEAALLDVDLSPLTAPREAALLAKLAEYPEALQRALEELGPHQVAFYLRDLAAELHSYYNAERVLVDDVALKMARLTLMHATRQVLRNGLALIGVSAPARM.

A 'HIGH' region motif is present at residues 132–142 (ANPTGPLHVGH).

Belongs to the class-I aminoacyl-tRNA synthetase family. In terms of assembly, monomer.

The protein localises to the cytoplasm. The catalysed reaction is tRNA(Arg) + L-arginine + ATP = L-arginyl-tRNA(Arg) + AMP + diphosphate. The chain is Arginine--tRNA ligase from Herminiimonas arsenicoxydans.